The following is a 233-amino-acid chain: Phosphoribosylformylglycinamidine synthase subunit PurQ (233 aa).

Residues 9–233 (RIGIVTFPGS…LSGFLSAFSS (225 aa)) form the Glutamine amidotransferase type-1 domain. The Nucleophile role is filled by C92. Residues H201 and E203 contribute to the active site.

Part of the FGAM synthase complex composed of 1 PurL, 1 PurQ and 2 PurS subunits.

Its subcellular location is the cytoplasm. The catalysed reaction is N(2)-formyl-N(1)-(5-phospho-beta-D-ribosyl)glycinamide + L-glutamine + ATP + H2O = 2-formamido-N(1)-(5-O-phospho-beta-D-ribosyl)acetamidine + L-glutamate + ADP + phosphate + H(+). It catalyses the reaction L-glutamine + H2O = L-glutamate + NH4(+). It participates in purine metabolism; IMP biosynthesis via de novo pathway; 5-amino-1-(5-phospho-D-ribosyl)imidazole from N(2)-formyl-N(1)-(5-phospho-D-ribosyl)glycinamide: step 1/2. In terms of biological role, part of the phosphoribosylformylglycinamidine synthase complex involved in the purines biosynthetic pathway. Catalyzes the ATP-dependent conversion of formylglycinamide ribonucleotide (FGAR) and glutamine to yield formylglycinamidine ribonucleotide (FGAM) and glutamate. The FGAM synthase complex is composed of three subunits. PurQ produces an ammonia molecule by converting glutamine to glutamate. PurL transfers the ammonia molecule to FGAR to form FGAM in an ATP-dependent manner. PurS interacts with PurQ and PurL and is thought to assist in the transfer of the ammonia molecule from PurQ to PurL. The sequence is that of Phosphoribosylformylglycinamidine synthase subunit PurQ from Frankia casuarinae (strain DSM 45818 / CECT 9043 / HFP020203 / CcI3).